Here is a 534-residue protein sequence, read N- to C-terminus: BEN domain-containing protein 4 (534 aa).

Disordered stretches follow at residues 1–24, 48–128, and 287–322; these read MEEE…RSPY, ELPH…AASS, and VHTL…EEGY. Residues 53-63 show a composition bias toward pro residues; sequence RAPPPPPPPFA. Polar residues predominate over residues 69–83; the sequence is SISSSEPPPQQFQAQ. Residues 91 to 109 are compositionally biased toward low complexity; that stretch reads GRAAAAASSSSPSCTPATS. The segment covering 295 to 310 has biased composition (polar residues); it reads SPATSESHGHPSSSTL. Over residues 311–321 the composition is skewed to acidic residues; the sequence is PEEEEEEDEEG. Residues 324 to 351 adopt a coiled-coil conformation; it reads PRCQELEQEVISLQQENEELRRKLESIP. In terms of domain architecture, BEN spans 390 to 498; that stretch reads NYPVYITSKQ…DAVGHARQGR (109 aa).

This Homo sapiens (Human) protein is BEN domain-containing protein 4 (BEND4).